The primary structure comprises 151 residues: Large ribosomal subunit protein bL9 (151 aa).

It belongs to the bacterial ribosomal protein bL9 family.

In terms of biological role, binds to the 23S rRNA. The chain is Large ribosomal subunit protein bL9 from Thermosipho africanus (strain TCF52B).